The following is a 476-amino-acid chain: Glycogen synthase (476 aa).

Residue Lys-15 coordinates ADP-alpha-D-glucose.

The protein belongs to the glycosyltransferase 1 family. Bacterial/plant glycogen synthase subfamily.

The enzyme catalyses [(1-&gt;4)-alpha-D-glucosyl](n) + ADP-alpha-D-glucose = [(1-&gt;4)-alpha-D-glucosyl](n+1) + ADP + H(+). Its pathway is glycan biosynthesis; glycogen biosynthesis. Functionally, synthesizes alpha-1,4-glucan chains using ADP-glucose. This Leptospira biflexa serovar Patoc (strain Patoc 1 / Ames) protein is Glycogen synthase.